The sequence spans 454 residues: Arginine biosynthesis bifunctional protein ArgJ, mitochondrial (454 aa).

Positions 184, 213, 224, 311, 449, and 454 each coordinate substrate. Threonine 224 acts as the Nucleophile in catalysis.

Belongs to the ArgJ family. In terms of assembly, heterodimer of an alpha and a beta chain. The alpha and beta chains are autoproteolytically processed from a single precursor protein within the mitochondrion.

Its subcellular location is the mitochondrion matrix. It carries out the reaction N(2)-acetyl-L-ornithine + L-glutamate = N-acetyl-L-glutamate + L-ornithine. The enzyme catalyses L-glutamate + acetyl-CoA = N-acetyl-L-glutamate + CoA + H(+). It participates in amino-acid biosynthesis; L-arginine biosynthesis; L-ornithine and N-acetyl-L-glutamate from L-glutamate and N(2)-acetyl-L-ornithine (cyclic): step 1/1. Its pathway is amino-acid biosynthesis; L-arginine biosynthesis; N(2)-acetyl-L-ornithine from L-glutamate: step 1/4. Its function is as follows. Catalyzes two activities which are involved in the cyclic version of arginine biosynthesis: the synthesis of acetylglutamate from glutamate and acetyl-CoA, and of ornithine by transacetylation between acetylornithine and glutamate. In Aspergillus clavatus (strain ATCC 1007 / CBS 513.65 / DSM 816 / NCTC 3887 / NRRL 1 / QM 1276 / 107), this protein is Arginine biosynthesis bifunctional protein ArgJ, mitochondrial.